Reading from the N-terminus, the 130-residue chain is Small ribosomal subunit protein uS11 (130 aa).

This sequence belongs to the universal ribosomal protein uS11 family. In terms of assembly, part of the 30S ribosomal subunit. Interacts with proteins S7 and S18. Binds to IF-3.

Functionally, located on the platform of the 30S subunit, it bridges several disparate RNA helices of the 16S rRNA. Forms part of the Shine-Dalgarno cleft in the 70S ribosome. The protein is Small ribosomal subunit protein uS11 of Synechococcus sp. (strain CC9902).